We begin with the raw amino-acid sequence, 569 residues long: Urease subunit alpha (569 aa).

Residues H136, H138, and K219 each coordinate Ni(2+). An N6-carboxylysine modification is found at K219. H221 serves as a coordination point for substrate. Ni(2+) contacts are provided by H248 and H274. H322 serves as the catalytic Proton donor. D362 contributes to the Ni(2+) binding site.

This sequence belongs to the metallo-dependent hydrolases superfamily. Urease alpha subunit family. As to quaternary structure, heterotrimer of UreA (gamma), UreB (beta) and UreC (alpha) subunits. Three heterotrimers associate to form the active enzyme. Ni cation serves as cofactor. Carboxylation allows a single lysine to coordinate two nickel ions.

It localises to the cytoplasm. It catalyses the reaction urea + 2 H2O + H(+) = hydrogencarbonate + 2 NH4(+). Its pathway is nitrogen metabolism; urea degradation; CO(2) and NH(3) from urea (urease route): step 1/1. The sequence is that of Urease subunit alpha from Microcystis aeruginosa (strain NIES-843 / IAM M-2473).